A 176-amino-acid polypeptide reads, in one-letter code: Dual-action ribosomal maturation protein DarP (176 aa).

It belongs to the DarP family.

Its subcellular location is the cytoplasm. Member of a network of 50S ribosomal subunit biogenesis factors which assembles along the 30S-50S interface, preventing incorrect 23S rRNA structures from forming. Promotes peptidyl transferase center (PTC) maturation. The chain is Dual-action ribosomal maturation protein DarP from Haemophilus ducreyi (strain 35000HP / ATCC 700724).